The sequence spans 193 residues: Peptidyl-tRNA hydrolase (193 aa).

His-17 contributes to the tRNA binding site. His-22 functions as the Proton acceptor in the catalytic mechanism. The tRNA site is built by Phe-68, Asn-70, and Asn-116.

The protein belongs to the PTH family. In terms of assembly, monomer.

It localises to the cytoplasm. The catalysed reaction is an N-acyl-L-alpha-aminoacyl-tRNA + H2O = an N-acyl-L-amino acid + a tRNA + H(+). Functionally, hydrolyzes ribosome-free peptidyl-tRNAs (with 1 or more amino acids incorporated), which drop off the ribosome during protein synthesis, or as a result of ribosome stalling. Catalyzes the release of premature peptidyl moieties from peptidyl-tRNA molecules trapped in stalled 50S ribosomal subunits, and thus maintains levels of free tRNAs and 50S ribosomes. The chain is Peptidyl-tRNA hydrolase from Xanthomonas axonopodis pv. citri (strain 306).